Reading from the N-terminus, the 64-residue chain is Large ribosomal subunit protein bL28 (64 aa).

It belongs to the bacterial ribosomal protein bL28 family.

The polypeptide is Large ribosomal subunit protein bL28 (Trichlorobacter lovleyi (strain ATCC BAA-1151 / DSM 17278 / SZ) (Geobacter lovleyi)).